A 316-amino-acid polypeptide reads, in one-letter code: Probable peptidyl-tRNA hydrolase 2 (316 aa).

Residues 1–127 (MSENIPDIDP…SHPVDPQEPN (127 aa)) are disordered. The segment covering 44–53 (PTPSSVTVDN) has biased composition (polar residues). The segment covering 75 to 89 (IPEVPIPSSAISISS) has biased composition (low complexity). The UBA domain occupies 128–169 (EVNNEYLAHLLDLGFDEYTAVLALKRTNSAGVEQAVAWIVER). The segment at 170-193 (SNESDFDEDSSSSENEADEEMGAV) is disordered. A compositionally biased stretch (acidic residues) spans 173–190 (SDFDEDSSSSENEADEEM).

The protein belongs to the PTH2 family.

It carries out the reaction an N-acyl-L-alpha-aminoacyl-tRNA + H2O = an N-acyl-L-amino acid + a tRNA + H(+). In terms of biological role, the natural substrate for this enzyme may be peptidyl-tRNAs which drop off the ribosome during protein synthesis. The protein is Probable peptidyl-tRNA hydrolase 2 of Caenorhabditis elegans.